A 618-amino-acid polypeptide reads, in one-letter code: DNA mismatch repair protein MutL (618 aa).

The interval 371–401 (AREPATPRYSGGASGGSGGRQSVGGWSHAQP) is disordered. Positions 382 to 392 (GASGGSGGRQS) are enriched in gly residues.

This sequence belongs to the DNA mismatch repair MutL/HexB family.

In terms of biological role, this protein is involved in the repair of mismatches in DNA. It is required for dam-dependent methyl-directed DNA mismatch repair. May act as a 'molecular matchmaker', a protein that promotes the formation of a stable complex between two or more DNA-binding proteins in an ATP-dependent manner without itself being part of a final effector complex. The chain is DNA mismatch repair protein MutL from Salmonella arizonae (strain ATCC BAA-731 / CDC346-86 / RSK2980).